A 220-amino-acid chain; its full sequence is Ribosomal RNA large subunit methyltransferase E (220 aa).

Gly60, Trp62, Asp92, Asp108, and Asp133 together coordinate S-adenosyl-L-methionine. Lys173 acts as the Proton acceptor in catalysis.

Belongs to the class I-like SAM-binding methyltransferase superfamily. RNA methyltransferase RlmE family.

It localises to the cytoplasm. The enzyme catalyses uridine(2552) in 23S rRNA + S-adenosyl-L-methionine = 2'-O-methyluridine(2552) in 23S rRNA + S-adenosyl-L-homocysteine + H(+). Functionally, specifically methylates the uridine in position 2552 of 23S rRNA at the 2'-O position of the ribose in the fully assembled 50S ribosomal subunit. This chain is Ribosomal RNA large subunit methyltransferase E, found in Burkholderia thailandensis (strain ATCC 700388 / DSM 13276 / CCUG 48851 / CIP 106301 / E264).